The primary structure comprises 435 residues: Methanethiol oxidase (435 aa).

An N-terminal signal peptide occupies residues 1–24; the sequence is MKKHLLAGACALAMGFAVIPGTFA.

Belongs to the selenium-binding protein family. In terms of assembly, homotetramer. The cofactor is Cu cation.

It is found in the periplasm. It carries out the reaction methanethiol + O2 + H2O = hydrogen sulfide + formaldehyde + H2O2 + H(+). It participates in organosulfur degradation. Inhibited by EDTA but not by EGTA. In terms of biological role, catalyzes the oxidation of methanethiol. Can also degrade ethanethiol, but not methanol, methylamine or dimethylsulfide. The chain is Methanethiol oxidase from Hyphomicrobium sp.